A 602-amino-acid polypeptide reads, in one-letter code: Alpha-glucosides permease MPH3 (602 aa).

Over 1–106 (MKNLSFLINR…AAAWSLLVST (106 aa)) the chain is Cytoplasmic. A helical transmembrane segment spans residues 107-127 (TLIMEGYDTAILGAFYALPIF). Topologically, residues 128–142 (QRKFGSQNDKTGEWE) are extracellular. Residues 143–163 (ISASWQIGLTLCYMAGEIVGL) form a helical membrane-spanning segment. Over 164 to 178 (QLTGPSVDLVGNRYT) the chain is Cytoplasmic. Residues 179-199 (LIIALFFLAAFTFILYFCNSL) form a helical membrane-spanning segment. A topological domain (extracellular) is located at residue Gly-200. A helical transmembrane segment spans residues 201–221 (MIAVGQALCGMPWGCFQCLTV). Residues 222-234 (SYASEICPLALRY) lie on the Cytoplasmic side of the membrane. Residues 235–255 (YLTTYSNLCWLFGQLFAAGIM) traverse the membrane as a helical segment. Residues 256 to 270 (KNSQKKYADSELGYK) are Extracellular-facing. The chain crosses the membrane as a helical span at residues 271-291 (LPFALQWILPVPLALGIFFAP). Topologically, residues 292–363 (ESPWWLVKKG…EDKINRRRTR (72 aa)) are cytoplasmic. A helical transmembrane segment spans residues 364–384 (ITCLCWAGQATCGSILIGYST). Residues 385–397 (YFYEKAGVSTEMS) lie on the Extracellular side of the membrane. A helical membrane pass occupies residues 398–418 (FTFSIIQYCLGICATFLSWWA). Over 419–426 (SKYFGRYD) the chain is Cytoplasmic. The chain crosses the membrane as a helical span at residues 427-447 (LYAFGLAFQTIVFFIIGGLGC). The Extracellular segment spans residues 448-459 (SSTHGSKMGSGS). Residues 460–480 (LLMAVAFFYNLGIAPVVFCLV) traverse the membrane as a helical segment. The Cytoplasmic segment spans residues 481 to 492 (SEMPSSRLRTKT). The chain crosses the membrane as a helical span at residues 493-513 (IILARNTYNVVSIICSVLILY). Topologically, residues 514-525 (QLNSKKWNWGAK) are extracellular. A helical transmembrane segment spans residues 526-546 (SGFFWGVLCFCTLIWAVVDLP). The Cytoplasmic portion of the chain corresponds to 547 to 602 (ETAGKTFVEINELFKLGVSARKFKSTKVDPFVVKNPPKDVSHNDPKGDIEASIAEE). The tract at residues 580–602 (KNPPKDVSHNDPKGDIEASIAEE) is disordered. The span at 582–595 (PPKDVSHNDPKGDI) shows a compositional bias: basic and acidic residues.

It belongs to the major facilitator superfamily. Sugar transporter (TC 2.A.1.1) family.

It localises to the cell membrane. High-affinity uptake of maltose and maltotriose. Also transports alpha-methylglucoside, glucose and turanose but not melezitose or trehalose. The sequence is that of Alpha-glucosides permease MPH3 (MPH3) from Saccharomyces cerevisiae (strain AWRI1631) (Baker's yeast).